Here is a 349-residue protein sequence, read N- to C-terminus: Spermidine/putrescine import ATP-binding protein PotA (349 aa).

Residues 7 to 237 (IELKGITKSY…PANSFVAKFI (231 aa)) form the ABC transporter domain. 39-46 (GPSGCGKT) lines the ATP pocket.

Belongs to the ABC transporter superfamily. Spermidine/putrescine importer (TC 3.A.1.11.1) family. As to quaternary structure, the complex is composed of two ATP-binding proteins (PotA), two transmembrane proteins (PotB and PotC) and a solute-binding protein (PotD).

Its subcellular location is the cell membrane. The catalysed reaction is ATP + H2O + polyamine-[polyamine-binding protein]Side 1 = ADP + phosphate + polyamineSide 2 + [polyamine-binding protein]Side 1.. Functionally, part of the ABC transporter complex PotABCD involved in spermidine/putrescine import. Responsible for energy coupling to the transport system. The chain is Spermidine/putrescine import ATP-binding protein PotA from Clostridium perfringens (strain SM101 / Type A).